A 168-amino-acid chain; its full sequence is Lipoprotein signal peptidase (168 aa).

3 consecutive transmembrane segments (helical) span residues 8 to 28 (LYYL…WLVV), 61 to 81 (GQFW…VIYI), and 91 to 111 (FGIA…DRIF). Catalysis depends on residues Asp117 and Asp135. Residues 128-148 (FPIFNVADAALTIGVALMFIY) form a helical membrane-spanning segment.

This sequence belongs to the peptidase A8 family.

It localises to the cell membrane. The catalysed reaction is Release of signal peptides from bacterial membrane prolipoproteins. Hydrolyzes -Xaa-Yaa-Zaa-|-(S,diacylglyceryl)Cys-, in which Xaa is hydrophobic (preferably Leu), and Yaa (Ala or Ser) and Zaa (Gly or Ala) have small, neutral side chains.. It functions in the pathway protein modification; lipoprotein biosynthesis (signal peptide cleavage). This protein specifically catalyzes the removal of signal peptides from prolipoproteins. In Anoxybacillus flavithermus (strain DSM 21510 / WK1), this protein is Lipoprotein signal peptidase.